We begin with the raw amino-acid sequence, 124 residues long: Prefoldin subunit beta (124 aa).

The protein belongs to the prefoldin subunit beta family. Heterohexamer of two alpha and four beta subunits.

It is found in the cytoplasm. Molecular chaperone capable of stabilizing a range of proteins. Seems to fulfill an ATP-independent, HSP70-like function in archaeal de novo protein folding. This is Prefoldin subunit beta (pfdB) from Thermoplasma acidophilum (strain ATCC 25905 / DSM 1728 / JCM 9062 / NBRC 15155 / AMRC-C165).